The primary structure comprises 284 residues: D-tagatose-1,6-bisphosphate aldolase subunit GatY (284 aa).

The active-site Proton donor is the D82. Zn(2+) is bound by residues H83 and H180. Position 181 (G181) interacts with dihydroxyacetone phosphate. H208 contacts Zn(2+). Dihydroxyacetone phosphate is bound by residues 209-211 (GAS) and 230-233 (NVAT).

The protein belongs to the class II fructose-bisphosphate aldolase family. TagBP aldolase GatY subfamily. As to quaternary structure, forms a complex with GatZ. Requires Zn(2+) as cofactor.

It carries out the reaction D-tagatofuranose 1,6-bisphosphate = D-glyceraldehyde 3-phosphate + dihydroxyacetone phosphate. Its pathway is carbohydrate metabolism; D-tagatose 6-phosphate degradation; D-glyceraldehyde 3-phosphate and glycerone phosphate from D-tagatose 6-phosphate: step 2/2. Functionally, catalytic subunit of the tagatose-1,6-bisphosphate aldolase GatYZ, which catalyzes the reversible aldol condensation of dihydroxyacetone phosphate (DHAP or glycerone-phosphate) with glyceraldehyde 3-phosphate (G3P) to produce tagatose 1,6-bisphosphate (TBP). Requires GatZ subunit for full activity and stability. Is involved in the catabolism of galactitol. The chain is D-tagatose-1,6-bisphosphate aldolase subunit GatY from Salmonella typhi.